Consider the following 362-residue polypeptide: Adenosine deaminase (362 aa).

Zn(2+)-binding residues include His-19 and His-21. 3 residues coordinate substrate: His-21, Asp-23, and Gly-181. His-208 contacts Zn(2+). The active-site Proton donor is Glu-211. Asp-300 contributes to the Zn(2+) binding site.

This sequence belongs to the metallo-dependent hydrolases superfamily. Adenosine and AMP deaminases family. Adenosine deaminase subfamily. Zn(2+) serves as cofactor.

The enzyme catalyses adenosine + H2O + H(+) = inosine + NH4(+). It carries out the reaction 2'-deoxyadenosine + H2O + H(+) = 2'-deoxyinosine + NH4(+). Catalyzes the hydrolytic deamination of adenosine and 2-deoxyadenosine. The chain is Adenosine deaminase from Mycolicibacterium vanbaalenii (strain DSM 7251 / JCM 13017 / BCRC 16820 / KCTC 9966 / NRRL B-24157 / PYR-1) (Mycobacterium vanbaalenii).